The following is a 307-amino-acid chain: Glutathione synthetase (307 aa).

An ATP-grasp domain is found at 120–304 (KLGALRFSRW…LADQTIERLR (185 aa)). 146-202 (AREQGDVVLKPLGGRAGLGVIRVQAEAPGLKALLELVTEQERLPVMAQRFLPDVTEG) lines the ATP pocket. Mg(2+) contacts are provided by glutamate 275 and asparagine 277.

Belongs to the prokaryotic GSH synthase family. The cofactor is Mg(2+). Mn(2+) serves as cofactor.

The enzyme catalyses gamma-L-glutamyl-L-cysteine + glycine + ATP = glutathione + ADP + phosphate + H(+). The protein operates within sulfur metabolism; glutathione biosynthesis; glutathione from L-cysteine and L-glutamate: step 2/2. The polypeptide is Glutathione synthetase (Parasynechococcus marenigrum (strain WH8102)).